The chain runs to 393 residues: S-adenosylmethionine synthase 2 (393 aa).

Residue glutamate 9 coordinates Mg(2+). Histidine 15 is a binding site for ATP. Position 43 (glutamate 43) interacts with K(+). 2 residues coordinate L-methionine: glutamate 56 and glutamine 99. ATP-binding positions include 167 to 169, 235 to 238, aspartate 246, 252 to 253, alanine 269, lysine 273, and lysine 277; these read DGK, SGRF, and RK. Aspartate 246 serves as a coordination point for L-methionine. Residue lysine 277 coordinates L-methionine.

Belongs to the AdoMet synthase family. Homotetramer. Mn(2+) is required as a cofactor. Requires Mg(2+) as cofactor. It depends on Co(2+) as a cofactor. The cofactor is K(+). In terms of tissue distribution, mostly expressed in flowers, seedpods and roots, and, to a lower extent, in stems and leaves.

The protein resides in the cytoplasm. The enzyme catalyses L-methionine + ATP + H2O = S-adenosyl-L-methionine + phosphate + diphosphate. The protein operates within amino-acid biosynthesis; S-adenosyl-L-methionine biosynthesis; S-adenosyl-L-methionine from L-methionine: step 1/1. Catalyzes the formation of S-adenosylmethionine from methionine and ATP. The reaction comprises two steps that are both catalyzed by the same enzyme: formation of S-adenosylmethionine (AdoMet) and triphosphate, and subsequent hydrolysis of the triphosphate. The sequence is that of S-adenosylmethionine synthase 2 (MSAMS2) from Brassica juncea (Indian mustard).